Reading from the N-terminus, the 393-residue chain is S-adenosylmethionine synthase 2 (393 aa).

Glu-9 serves as a coordination point for Mg(2+). Residue His-15 coordinates ATP. Glu-43 is a K(+) binding site. Residues Glu-56 and Gln-99 each coordinate L-methionine. ATP contacts are provided by residues 167-169, 235-238, Asp-246, 252-253, Ala-269, Lys-273, and Lys-277; these read DGK, SGRF, and RK. Asp-246 is a binding site for L-methionine. Lys-277 serves as a coordination point for L-methionine.

Belongs to the AdoMet synthase family. Homotetramer. The cofactor is Mn(2+). Mg(2+) serves as cofactor. Requires Co(2+) as cofactor. K(+) is required as a cofactor. As to expression, roots and shoots.

Its subcellular location is the cytoplasm. It catalyses the reaction L-methionine + ATP + H2O = S-adenosyl-L-methionine + phosphate + diphosphate. It participates in amino-acid biosynthesis; S-adenosyl-L-methionine biosynthesis; S-adenosyl-L-methionine from L-methionine: step 1/1. In terms of biological role, catalyzes the formation of S-adenosylmethionine from methionine and ATP. The reaction comprises two steps that are both catalyzed by the same enzyme: formation of S-adenosylmethionine (AdoMet) and triphosphate, and subsequent hydrolysis of the triphosphate. The polypeptide is S-adenosylmethionine synthase 2 (SAMS2) (Pinus contorta (Shore pine)).